A 194-amino-acid polypeptide reads, in one-letter code: FMN-dependent NADH:quinone oxidoreductase 1 (194 aa).

Residues S9 and 85–88 (MYNF) each bind FMN.

The protein belongs to the azoreductase type 1 family. As to quaternary structure, homodimer. FMN is required as a cofactor.

It carries out the reaction 2 a quinone + NADH + H(+) = 2 a 1,4-benzosemiquinone + NAD(+). The catalysed reaction is N,N-dimethyl-1,4-phenylenediamine + anthranilate + 2 NAD(+) = 2-(4-dimethylaminophenyl)diazenylbenzoate + 2 NADH + 2 H(+). Its function is as follows. Quinone reductase that provides resistance to thiol-specific stress caused by electrophilic quinones. Functionally, also exhibits azoreductase activity. Catalyzes the reductive cleavage of the azo bond in aromatic azo compounds to the corresponding amines. This is FMN-dependent NADH:quinone oxidoreductase 1 from Xanthomonas euvesicatoria pv. vesicatoria (strain 85-10) (Xanthomonas campestris pv. vesicatoria).